We begin with the raw amino-acid sequence, 378 residues long: Alginate lyase (378 aa).

The signal sequence occupies residues M1–A28. Residues S67–K68, H140–T141, and Y258 each bind substrate.

The protein belongs to the polysaccharide lyase 5 family.

It is found in the periplasm. It catalyses the reaction Eliminative cleavage of alginate to give oligosaccharides with 4-deoxy-alpha-L-erythro-hex-4-enuronosyl groups at their non-reducing ends and beta-D-mannuronate at their reducing end.. The monovalent cation sodium enhances activity but is not absolutely required. Its function is as follows. Catalyzes the depolymerization of alginate by cleaving the beta-1,4 glycosidic bond between two adjacent sugar residues via a beta-elimination mechanism. Degrades deacetylated polymannuronate (polyM) alginate from P.aeruginosa more efficiently than non-deacetylated polyM and alginate from M.pyrifera. AlgL from P.syringae also degrades its own alginate, which may indicate a role in cleaving preformed alginate and/or in determining the length of the alginate polymer. May serve to degrade mislocalized alginate that is trapped in the periplasmic space. In Pseudomonas syringae pv. syringae, this protein is Alginate lyase.